The primary structure comprises 773 residues: Molybdenum cofactor sulfurase (773 aa).

K243 is modified (N6-(pyridoxal phosphate)lysine). C410 is an active-site residue. The MOSC domain maps to 632–773 (LRLLRQSGQR…LSCGDTVLVE (142 aa)). A Phosphoserine modification is found at S731.

Belongs to the class-V pyridoxal-phosphate-dependent aminotransferase family. MOCOS subfamily. It depends on pyridoxal 5'-phosphate as a cofactor.

The enzyme catalyses Mo-molybdopterin + L-cysteine + AH2 = thio-Mo-molybdopterin + L-alanine + A + H2O. It participates in cofactor biosynthesis; molybdopterin biosynthesis. Its function is as follows. Sulfurates the molybdenum cofactor. Sulfation of molybdenum is essential for xanthine dehydrogenase (XDH) and aldehyde oxidase (ADO) enzymes in which molybdenum cofactor is liganded by 1 oxygen and 1 sulfur atom in active form. The polypeptide is Molybdenum cofactor sulfurase (Drosophila ananassae (Fruit fly)).